The chain runs to 604 residues: Ectonucleoside triphosphate diphosphohydrolase 7 (604 aa).

At 1–28 (MARISFSYLCPASWYFTVPTVSPFLRQR) the chain is on the cytoplasmic side. Residues 29 to 49 (VAFLGLFFISCLLLLMLIIDF) form a helical membrane-spanning segment. The Vesicular portion of the chain corresponds to 50 to 546 (RHWSASLPRD…QAHGSWFRLS (497 aa)). The active-site Proton acceptor is Glu217. Residue Asn330 is glycosylated (N-linked (GlcNAc...) asparagine). A disulfide bond links Cys448 and Cys477. The helical transmembrane segment at 547–567 (FVYNHYLFFACILVVLLAIVL) threads the bilayer. The Cytoplasmic portion of the chain corresponds to 568 to 604 (YLLRLRRIHHRQTRASAPLDLLWLEEVVPMMGVQVGP).

It belongs to the GDA1/CD39 NTPase family. Ca(2+) is required as a cofactor. Mg(2+) serves as cofactor.

It localises to the cytoplasmic vesicle membrane. It catalyses the reaction a ribonucleoside 5'-triphosphate + H2O = a ribonucleoside 5'-diphosphate + phosphate + H(+). The catalysed reaction is UTP + H2O = UDP + phosphate + H(+). The enzyme catalyses GTP + H2O = GDP + phosphate + H(+). It carries out the reaction CTP + H2O = CDP + phosphate + H(+). In terms of biological role, catalyzes the hydrolysis of nucleoside triphosphates and diphosphates in a calcium- or magnesium-dependent manner. Preferentially hydrolyzes nucleoside 5'-triphosphates, with substrate preference for UTP &gt; GTP &gt; CTP. Hydrolyzes ATP and nucleoside diphosphates only to a minor extent. In Pongo abelii (Sumatran orangutan), this protein is Ectonucleoside triphosphate diphosphohydrolase 7 (ENTPD7).